The sequence spans 495 residues: Potassium voltage-gated channel subfamily A member 1 (495 aa).

The disordered stretch occupies residues Met-1–His-30. A tetramerization domain region spans residues Met-1–Glu-128. Topologically, residues Met-1 to Gly-164 are cytoplasmic. At Ser-23 the chain carries Phosphoserine. The helical transmembrane segment at Pro-165 to Leu-186 threads the bilayer. The Extracellular segment spans residues Glu-187–Pro-220. Residue Asn-207 is glycosylated (N-linked (GlcNAc...) asparagine). The chain crosses the membrane as a helical span at residues Phe-221 to Ala-242. A lipid anchor (S-palmitoyl cysteine) is attached at Cys-243. Residues Cys-243 to Ile-253 are Cytoplasmic-facing. The helical transmembrane segment at Met-254–Ala-274 threads the bilayer. At Glu-275–Ser-287 the chain is on the extracellular side. The chain crosses the membrane as a helical; Voltage-sensor span at residues Leu-288 to His-308. Over Ser-309–Met-323 the chain is Cytoplasmic. The S4-S5 linker stretch occupies residues Lys-310–Met-323. Ser-322 bears the Phosphoserine; by PKA mark. Residues Arg-324 to Tyr-345 traverse the membrane as a helical segment. Residues Phe-346–Ile-359 lie on the Extracellular side of the membrane. The segment at residues Pro-360–Thr-371 is an intramembrane region (helical). A Selectivity filter motif is present at residues Thr-372–Asp-377. An intramembrane segment occupies Thr-372 to Tyr-379. At Pro-380–Lys-386 the chain is on the extracellular side. The chain crosses the membrane as a helical span at residues Ile-387–Tyr-415. Over His-416–Val-495 the chain is Cytoplasmic. 2 positions are modified to phosphoserine: Ser-437 and Ser-439. Ser-446 is modified (phosphoserine; by PKA). Positions Thr-493–Val-495 match the PDZ-binding motif.

This sequence belongs to the potassium channel family. A (Shaker) (TC 1.A.1.2) subfamily. Kv1.1/KCNA1 sub-subfamily. In terms of assembly, homotetramer and heterotetramer with other channel-forming alpha subunits, such as KCNA2, KCNA4, KCNA5, KCNA6 and KCNA7. Channel activity is regulated by interaction with the beta subunits KCNAB1 and KCNAB2. Identified in a complex with KCNA2 and KCNAB2. Interacts (via C-terminus) with the PDZ domains of DLG1, DLG2 and DLG4. Interacts with LGI1 within a complex containing LGI1, KCNA4 and KCNAB1. Interacts (via cytoplasmic N-terminal domain) with KCNRG; this inhibits channel activity. Interacts with ANK3; this inhibits channel activity. Interacts (via N-terminus) with STX1A; this promotes channel inactivation. Interacts (via N-terminus) with the heterodimer formed by GNB1 and GNG2; this promotes channel inactivation. Can interact simultaneously with STX1A and the heterodimer formed by GNB1 and GNG2. Interacts with ADAM11. In terms of processing, palmitoylated on Cys-243; which may be required for membrane targeting. N-glycosylated. Post-translationally, phosphorylated on tyrosine residues. Phosphorylation increases in response to NRG1; this inhibits channel activity. Phosphorylated by PKA. Phosphorylation at Ser-446 regulates channel activity by down-regulating expression at the cell membrane. As to expression, detected in hippocampus, in the middle third of the molecular layer of the dentate gyrus and in stratum radiatum and stratum oriens. Detected in the mossy fiber zone in the hippocampus CA3 region, at or near axon terminals. Detected in brain cortex, at basket cell terminals. Detected adjacent to nodes of Ranvier in juxtaparanodal zones in spinal cord nerve fibers, but also in paranodal regions in some myelinated spinal cord axons. Detected in juxtaparanodal regions adjacent to the nodes of Ranvier in myelinated axons in cerebellar white matter. Detected in sensory neurons. Detected in neurons from the medial nucleus of the trapezoid body. Detected in basolateral amygdala. Detected in the paraventricular nucleus of the hypothalamus. Detected in the islet of Langerhans (at protein level).

The protein localises to the cell membrane. Its subcellular location is the membrane. The protein resides in the cell projection. It localises to the axon. It is found in the cytoplasmic vesicle. The protein localises to the perikaryon. Its subcellular location is the endoplasmic reticulum. The protein resides in the dendrite. It localises to the cell junction. It is found in the synapse. The protein localises to the presynapse. Its subcellular location is the presynaptic cell membrane. The enzyme catalyses K(+)(in) = K(+)(out). Its activity is regulated as follows. Inhibited by 4-aminopyridine (4-AP) and by tetraethylammonium (TEA). Inhibited by kaliotoxin (KTX). In terms of biological role, voltage-gated potassium channel that mediates transmembrane potassium transport in excitable membranes, primarily in the brain and the central nervous system, but also in the kidney. Contributes to the regulation of the membrane potential and nerve signaling, and prevents neuronal hyperexcitability. Forms tetrameric potassium-selective channels through which potassium ions pass in accordance with their electrochemical gradient. The channel alternates between opened and closed conformations in response to the voltage difference across the membrane. Can form functional homotetrameric channels and heterotetrameric channels that contain variable proportions of KCNA1, KCNA2, KCNA4, KCNA5, KCNA6, KCNA7, and possibly other family members as well; channel properties depend on the type of alpha subunits that are part of the channel. Channel properties are modulated by cytoplasmic beta subunits that regulate the subcellular location of the alpha subunits and promote rapid inactivation of delayed rectifier potassium channels. In vivo, membranes probably contain a mixture of heteromeric potassium channel complexes, making it difficult to assign currents observed in intact tissues to any particular potassium channel family member. Homotetrameric KCNA1 forms a delayed-rectifier potassium channel that opens in response to membrane depolarization, followed by slow spontaneous channel closure. In contrast, a heterotetrameric channel formed by KCNA1 and KCNA4 shows rapid inactivation. Regulates neuronal excitability in hippocampus, especially in mossy fibers and medial perforant path axons, preventing neuronal hyperexcitability. Response to toxins that are selective for KCNA1, respectively for KCNA2, suggests that heteromeric potassium channels composed of both KCNA1 and KCNA2 play a role in pacemaking and regulate the output of deep cerebellar nuclear neurons. May function as down-stream effector for G protein-coupled receptors and inhibit GABAergic inputs to basolateral amygdala neurons. May contribute to the regulation of neurotransmitter release, such as gamma-aminobutyric acid (GABA) release. Plays a role in regulating the generation of action potentials and preventing hyperexcitability in myelinated axons of the vagus nerve, and thereby contributes to the regulation of heart contraction. Required for normal neuromuscular responses. Regulates the frequency of neuronal action potential firing in response to mechanical stimuli, and plays a role in the perception of pain caused by mechanical stimuli, but does not play a role in the perception of pain due to heat stimuli. Required for normal responses to auditory stimuli and precise location of sound sources, but not for sound perception. The use of toxins that block specific channels suggest that it contributes to the regulation of the axonal release of the neurotransmitter dopamine. Required for normal postnatal brain development and normal proliferation of neuronal precursor cells in the brain. Plays a role in the reabsorption of Mg(2+) in the distal convoluted tubules in the kidney and in magnesium ion homeostasis, probably via its effect on the membrane potential. The sequence is that of Potassium voltage-gated channel subfamily A member 1 from Rattus norvegicus (Rat).